The primary structure comprises 655 residues: A-type voltage-gated potassium channel KCND3 (655 aa).

At 1–182 (MAAGVAAWLP…FENPHTSTLA (182 aa)) the chain is on the cytoplasmic side. The interaction with KCNIP1 and KCNIP2 stretch occupies residues 6 to 21 (AAWLPFARAAAIGWMP). The segment at 70 to 78 (EKEFFFNED) is interaction with KCNIP1. Residues His104, Cys110, Cys131, and Cys132 each coordinate Zn(2+). A Phosphoserine modification is found at Ser153. A helical transmembrane segment spans residues 183-204 (LVFYYVTGFFIAVSVITNVVET). The Extracellular portion of the chain corresponds to 205 to 223 (VPCGTVPGSKELPCGERYS). Residues 224-246 (VAFFCLDTACVMIFTVEYLLRLF) traverse the membrane as a helical segment. At 247–253 (AAPSRYR) the chain is on the cytoplasmic side. The chain crosses the membrane as a helical span at residues 254–277 (FIRSVMSIIDVVAIMPYYIGLVMT). Residues 278 to 283 (NNEDVS) lie on the Extracellular side of the membrane. A helical; Voltage-sensor transmembrane segment spans residues 284–306 (GAFVTLRVFRVFRIFKFSRHSQG). The Cytoplasmic portion of the chain corresponds to 307–318 (LRILGYTLKSCA). The chain crosses the membrane as a helical span at residues 319–343 (SELGFLLFSLTMAIIIFATVMFYAE). The Extracellular segment spans residues 344–352 (KGSSASKFT). Positions 353–366 (SIPASFWYTIVTMT) form an intramembrane region, helical. 4 residues coordinate K(+): Thr367, Leu368, Gly369, and Tyr370. The Selectivity filter motif lies at 367-372 (TLGYGD). The stretch at 367 to 374 (TLGYGDMV) is an intramembrane region. A helical transmembrane segment spans residues 378–400 (IAGKIFGSICSLSGVLVIALPVP). The Cytoplasmic segment spans residues 401–655 (VIVSNFSRIY…TSNVVKVSAL (255 aa)). Thr459 bears the Phosphothreonine mark. The interval 470 to 487 (SLIESQHHHLLHCLEKTT) is interaction with KCNIP1 and KCNIP2. The tract at residues 472 to 487 (IESQHHHLLHCLEKTT) is mediates dendritic targeting. A disordered region spans residues 523–565 (SSMQNYPSTRSPSLSSHSGLTTTCCSRRSKKTTHLPNSNLPAT). The span at 529-548 (PSTRSPSLSSHSGLTTTCCS) shows a compositional bias: low complexity. A phosphoserine mark is found at Ser569 and Ser585. Positions 615-655 (ISIPTPPALTPEGESRPPPASPGPNTNIPSITSNVVKVSAL) are disordered. Polar residues predominate over residues 637-655 (GPNTNIPSITSNVVKVSAL).

Belongs to the potassium channel family. D (Shal) (TC 1.A.1.2) subfamily. Kv4.3/KCND3 sub-subfamily. As to quaternary structure, homotetramer. Heterotetramer with KCND2. Associates with the regulatory subunit KCNIP3. Associates with the regulatory subunit KCNIP4. Interacts with KCNE1, KCNE2, SCN1B and KCNAB1 and DLG1. Component of heteromultimeric potassium channels. Identified in potassium channel complexes containing KCND1, KCND2, KCND3, KCNIP1, KCNIP2, KCNIP3, KCNIP4, DPP6 and DPP10. Interacts with KCNIP1; each KCNIP1 monomer interacts with two adjacent KCND3 subunits, through both the N-terminal inactivation ball of a KCND3 subunit and a C-terminal helix from the adjacent KCND3 subunit, clamping them together; this interaction stabilizes the tetrameric form and modulates the channel gating kinetics namely channel activation and inactivation kinetics and rate of recovery from inactivation. Interacts with DPP6; this interaction modulates the channel gating kinetics namely channel activation and inactivation kinetics and rate of recovery from inactivation. Interacts with KCNIP2; each KCNIP2 monomer interacts with two adjacent KCND3 subunits, through both the N-terminal inactivation ball of a KCND3 subunit and a C-terminal helix from the adjacent KCND3 subunit, clamping them together; this interaction modulates the channel gating kinetics. Regulated through phosphorylation at Ser-569 by CaMK2D.

It is found in the cell membrane. It localises to the sarcolemma. The protein localises to the cell projection. The protein resides in the dendrite. It catalyses the reaction K(+)(in) = K(+)(out). Its function is as follows. Pore-forming (alpha) subunit of voltage-gated A-type potassium channels that mediates transmembrane potassium transport in excitable membranes, in brain and heart. In cardiomyocytes, may generate the transient outward potassium current I(To). In neurons, may conduct the transient subthreshold somatodendritic A-type potassium current (ISA). Kinetics properties are characterized by fast activation at subthreshold membrane potentials, rapid inactivation, and quick recovery from inactivation. Channel properties are modulated by interactions with regulatory subunits. Interaction with the regulatory subunits KCNIP1 or KCNIP2 modulates the channel gating kinetics namely channel activation and inactivation kinetics and rate of recovery from inactivation. Likewise, interaction with DPP6 modulates the channel gating kinetics namely channel activation and inactivation kinetics. In Mus musculus (Mouse), this protein is A-type voltage-gated potassium channel KCND3.